The following is a 244-amino-acid chain: tRNA pseudouridine synthase A 2 (244 aa).

Catalysis depends on D52, which acts as the Nucleophile. Position 110 (Y110) interacts with substrate.

This sequence belongs to the tRNA pseudouridine synthase TruA family. Homodimer.

It carries out the reaction uridine(38/39/40) in tRNA = pseudouridine(38/39/40) in tRNA. Its function is as follows. Formation of pseudouridine at positions 38, 39 and 40 in the anticodon stem and loop of transfer RNAs. The polypeptide is tRNA pseudouridine synthase A 2 (Clostridium perfringens (strain 13 / Type A)).